Consider the following 85-residue polypeptide: MGDVALIIKVMPESPEVNRETIVATIKEKFPRVQDIREEPIGFGLVAIKVALVVPDAEGQTETIEATLNAIDGVERAEIVESTLV.

It belongs to the EF-1-beta/EF-1-delta family.

Its function is as follows. Promotes the exchange of GDP for GTP in EF-1-alpha/GDP, thus allowing the regeneration of EF-1-alpha/GTP that could then be used to form the ternary complex EF-1-alpha/GTP/AAtRNA. In Methanospirillum hungatei JF-1 (strain ATCC 27890 / DSM 864 / NBRC 100397 / JF-1), this protein is Elongation factor 1-beta.